The chain runs to 352 residues: Sphingosine 1-phosphate receptor 2 (352 aa).

Residues 1–34 (MGGLYSEYLNPEKVLEHYNYTKETLDMQETTSRK) lie on the Extracellular side of the membrane. A glycan (N-linked (GlcNAc...) asparagine) is linked at Asn-19. A helical membrane pass occupies residues 35–59 (VASAFIIILCCAIVVENLLVLIAVA). The Cytoplasmic portion of the chain corresponds to 60–66 (RNSKFHS). The chain crosses the membrane as a helical span at residues 67–95 (AMYLFLGNLAASDLLAGVAFVANTLLSGH). At 96–109 (VTLSLTPVQWFARE) the chain is on the extracellular side. The helical transmembrane segment at 110–128 (GSAFITLSASVFSLLAIAI) threads the bilayer. Residues 129–147 (ERQVALAKVKLYGSDKSCR) are Cytoplasmic-facing. The chain crosses the membrane as a helical span at residues 148–173 (MLMLIGASWLISLILGGLPILGWNCL). The Extracellular segment spans residues 174–189 (NQLEACSTVLPLYAKH). The helical transmembrane segment at 190–210 (YVLCVVTIFSVILLAIVALYV) threads the bilayer. Residues 211–233 (RIYFVVRSSHADVAGPQTLALLK) are Cytoplasmic-facing. Residues 234–255 (TVTIVLGVFIICWLPAFSILLL) traverse the membrane as a helical segment. Residues 256–271 (DSTCPVRACPVLYKAH) are Extracellular-facing. The helical transmembrane segment at 272–292 (YFFAFATLNSLLNPVIYTWRS) threads the bilayer. Over 293–352 (RDLRREVLRPLQCWRRGKGVTGRRGGNPGHRLLPLRSSSSLERGMHMPTSPTFLEGNTVV) the chain is Cytoplasmic. Cys-305 carries S-palmitoyl cysteine lipidation. The segment at 333-352 (LERGMHMPTSPTFLEGNTVV) is disordered.

This sequence belongs to the G-protein coupled receptor 1 family. In terms of tissue distribution, most abundant in heart and lung; low, but clearly observed in kidney, liver and thymus; much lower but detectable in brain, testis, stomach and intestine. Not significantly detected in any of the sections of embryonic day (E) 14-18, except in embryonic brain.

Its subcellular location is the cell membrane. In terms of biological role, receptor for the lysosphingolipid sphingosine 1-phosphate (S1P). S1P is a bioactive lysophospholipid that elicits diverse physiological effects on most types of cells and tissues. Receptor for the chemokine-like protein FAM19A5. Mediates the inhibitory effect of FAM19A5 on vascular smooth muscle cell proliferation and migration. In lymphoid follicles, couples the binding of S1P to the activation of GNA13 and downstream inhibition of AKT activation leading to suppression of germinal center (GC) B cell growth and migration outside the GC niche. This Mus musculus (Mouse) protein is Sphingosine 1-phosphate receptor 2 (S1pr2).